The sequence spans 177 residues: SPbeta prophage-derived uncharacterized N-acetyltransferase YokL (177 aa).

The 160-residue stretch at 11 to 170 (LTLRAIQPED…DGICFGMTRE (160 aa)) folds into the N-acetyltransferase domain.

Belongs to the acetyltransferase family.

This Bacillus subtilis (strain 168) protein is SPbeta prophage-derived uncharacterized N-acetyltransferase YokL (yokL).